A 169-amino-acid chain; its full sequence is Thaumatin-like pathogenesis-related protein 4 (169 aa).

Positions 1–21 (MATSSTVLFLLLAVFAASASA) are cleaved as a signal peptide.

This sequence belongs to the thaumatin family.

Its function is as follows. Associated with resistance against stem rust fungi. The protein is Thaumatin-like pathogenesis-related protein 4 (RASTL-4) of Avena sativa (Oat).